A 283-amino-acid chain; its full sequence is Thymidylate synthase (283 aa).

Arg22 serves as a coordination point for dUMP. Cys160 functions as the Nucleophile in the catalytic mechanism. Residues 180-183, Asn191, and 221-223 contribute to the dUMP site; these read RSCD and HIY. Residue Asp183 coordinates (6R)-5,10-methylene-5,6,7,8-tetrahydrofolate. Ser282 is a (6R)-5,10-methylene-5,6,7,8-tetrahydrofolate binding site.

The protein belongs to the thymidylate synthase family. Bacterial-type ThyA subfamily. As to quaternary structure, homodimer.

It is found in the cytoplasm. The enzyme catalyses dUMP + (6R)-5,10-methylene-5,6,7,8-tetrahydrofolate = 7,8-dihydrofolate + dTMP. The protein operates within pyrimidine metabolism; dTTP biosynthesis. Functionally, catalyzes the reductive methylation of 2'-deoxyuridine-5'-monophosphate (dUMP) to 2'-deoxythymidine-5'-monophosphate (dTMP) while utilizing 5,10-methylenetetrahydrofolate (mTHF) as the methyl donor and reductant in the reaction, yielding dihydrofolate (DHF) as a by-product. This enzymatic reaction provides an intracellular de novo source of dTMP, an essential precursor for DNA biosynthesis. This Haemophilus influenzae (strain 86-028NP) protein is Thymidylate synthase.